Here is a 392-residue protein sequence, read N- to C-terminus: Type III polyketide synthase B (392 aa).

Residue 57 to 64 (KLTRLCKT) participates in CoA binding. C166 acts as the Nucleophile in catalysis. 218–219 (GD) contacts substrate. CoA-binding positions include L269, 309–312 (GGPA), and A312.

The protein belongs to the thiolase-like superfamily. Chalcone/stilbene synthases family. Homodimer. Interacts with 4CLL1/ACOS5 and TKPR1. In terms of tissue distribution, expressed in flowers and flower buds (at protein level). Mostly confined to anther tapetal cells.

It is found in the endoplasmic reticulum. It functions in the pathway secondary metabolite biosynthesis; flavonoid biosynthesis. In terms of biological role, plant type III polyketide synthases (PKSs) that catalyzes the condensation of malonyl-CoA units with various CoA ester starter molecules to generate a diverse array of natural products including long-chain alkyl alpha-pyrones. Accepts up to C(20) chain-length fatty acyl CoAs as starter substrates, and carries out sequential condensations with malonyl-CoA to produce triketide and tetraketide alpha-pyrones, potential sporopollenin precursors. Favorite substrates for are midchain- and v-hydroxylated fatty acyl-CoAs (e.g. 12-hydroxyoctadecanoyl-CoA and 16-hydroxyhexadecanoyl-CoA). Required for pollen development and sporopollenin biosynthesis, the major constituent of exine in the outer pollen wall. In vitro, can use 4-coumaroyl-coenzyme A as substrate to produce bis-noryangonin and fatty acyl-coenzyme A as substrate to produce medium-chain alkyl pyrones. May play a role in both the synthesis of pollen fatty acids and phenolics found in exine. This is Type III polyketide synthase B from Arabidopsis thaliana (Mouse-ear cress).